An 83-amino-acid chain; its full sequence is U5-theraphotoxin-Hs1a 6 (83 aa).

A signal peptide spans 1-21 (MKTSMFLTLTGLVLLFVVCYA). Residues 22-49 (SESEEKEFPKELLSSIFAADSDFKVEER) constitute a propeptide that is removed on maturation. Cystine bridges form between cysteine 51-cysteine 63, cysteine 56-cysteine 68, and cysteine 62-cysteine 75.

This sequence belongs to the neurotoxin 10 (Hwtx-1) family. 51 (Hntx-8) subfamily. Hntx-8 sub-subfamily. In terms of tissue distribution, expressed by the venom gland.

The protein localises to the secreted. Its function is as follows. Agglutinates erythrocytes. The sequence is that of U5-theraphotoxin-Hs1a 6 from Cyriopagopus schmidti (Chinese bird spider).